The sequence spans 291 residues: Ribosomal RNA small subunit methyltransferase A (291 aa).

S-adenosyl-L-methionine contacts are provided by His21, Leu23, Gly48, Glu70, Asp95, and Asn115.

It belongs to the class I-like SAM-binding methyltransferase superfamily. rRNA adenine N(6)-methyltransferase family. RsmA subfamily.

The protein resides in the cytoplasm. It carries out the reaction adenosine(1518)/adenosine(1519) in 16S rRNA + 4 S-adenosyl-L-methionine = N(6)-dimethyladenosine(1518)/N(6)-dimethyladenosine(1519) in 16S rRNA + 4 S-adenosyl-L-homocysteine + 4 H(+). Specifically dimethylates two adjacent adenosines (A1518 and A1519) in the loop of a conserved hairpin near the 3'-end of 16S rRNA in the 30S particle. May play a critical role in biogenesis of 30S subunits. In Prochlorococcus marinus (strain NATL2A), this protein is Ribosomal RNA small subunit methyltransferase A.